The primary structure comprises 967 residues: Haze protective factor 1 (967 aa).

Positions 1-23 (MFNRFNKLQAALALVLYSQSALG) are cleaved as a signal peptide. N-linked (GlcNAc...) asparagine glycosylation is found at asparagine 28 and asparagine 35. The interval 72–301 (SSSTEVSSSI…STSSASTASG (230 aa)) is disordered. 9 tandem repeats follow at residues 93 to 105 (SITSSGSSVSGSS), 106 to 118 (SITSSGSSVSSSS), 119 to 131 (SATESGSSASGSS), 132 to 144 (SATESGSSVSGSS), 153 to 165 (SATESGSSVSGST), 166 to 178 (SATESGSSASGSS), 179 to 191 (SATESGSSASGSS), 192 to 204 (SATESGSSVSGSS), and 205 to 217 (SATESGSSVSGSS). The tract at residues 93-278 (SITSSGSSVS…QSGSSVSGSS (186 aa)) is 13 X approximate repeats, Ser-rich. A 1-10; approximate repeat occupies 218 to 230 (SATESGSASSVPS). Residues 234 to 247 (SVTESGSSSSASES) form a 1-11; approximate repeat. A 1-12; approximate repeat occupies 248-259 (SITQSGTASGSS). One copy of the 1-13 repeat lies at 266–278 (SVTQSGSSVSGSS). N-linked (GlcNAc...) asparagine glycans are attached at residues asparagine 493, asparagine 601, and asparagine 638. Tandem repeats lie at residues 745–780 (SSKSYTTVTVTHCDNNGCNTKTVTSECPEETSATTT), 781–815 (SPKSYTTVTVTHCDDNGCNTKTVTSEAPEATTTTV), 816–854 (SPKTYTTATVTQCDDNGCSTKTVTSEAPKETSETSETSA), and 855–893 (APKTYTTATVTQCDDNGCNVKIITSQIPEATSTVTATSA). Residues 745 to 902 (SSKSYTTVTV…ASPKSYTTVT (158 aa)) are 4.5 X approximate tandem repeats, Thr-rich. Residues 836–857 (KTVTSEAPKETSETSETSAAPK) form a disordered region. One copy of the 2-5; truncated repeat lies at 894 to 902 (SPKSYTTVT). Residue alanine 946 is the site of GPI-anchor amidated alanine attachment. Positions 947–967 (AGLNANTLNALVGIFVLAFFN) are cleaved as a propeptide — removed in mature form.

The protein belongs to the SRP1/TIP1 family. Post-translationally, the GPI-anchor is attached to the protein in the endoplasmic reticulum and serves to target the protein to the cell surface. There, the glucosamine-inositol phospholipid moiety is cleaved off and the GPI-modified mannoprotein is covalently attached via its lipidless GPI glycan remnant to the 1,6-beta-glucan of the outer cell wall layer.

Its subcellular location is the secreted. It is found in the cell wall. The protein localises to the membrane. Its function is as follows. Involved in cell wall organization and biosynthesis. This Saccharomyces cerevisiae (strain ATCC 204508 / S288c) (Baker's yeast) protein is Haze protective factor 1 (HPF1).